We begin with the raw amino-acid sequence, 242 residues long: Large ribosomal subunit protein uL2 (242 aa).

The segment at 201-242 (VDHPFGGGRHQHTGKPTTVSRKKVPPGRKVGHISARRTGVRK) is disordered. Residues 220–242 (SRKKVPPGRKVGHISARRTGVRK) are compositionally biased toward basic residues.

Belongs to the universal ribosomal protein uL2 family. As to quaternary structure, part of the 50S ribosomal subunit. Forms a bridge to the 30S subunit in the 70S ribosome.

Functionally, one of the primary rRNA binding proteins. Required for association of the 30S and 50S subunits to form the 70S ribosome, for tRNA binding and peptide bond formation. It has been suggested to have peptidyltransferase activity; this is somewhat controversial. Makes several contacts with the 16S rRNA in the 70S ribosome. This Methanocaldococcus jannaschii (strain ATCC 43067 / DSM 2661 / JAL-1 / JCM 10045 / NBRC 100440) (Methanococcus jannaschii) protein is Large ribosomal subunit protein uL2.